Here is a 256-residue protein sequence, read N- to C-terminus: Glutamate racemase (256 aa).

Substrate-binding positions include 5 to 6 and 37 to 38; these read DS and YG. Catalysis depends on cysteine 69, which acts as the Proton donor/acceptor. 70 to 71 is a substrate binding site; that stretch reads NT. The active-site Proton donor/acceptor is cysteine 181. 182–183 provides a ligand contact to substrate; sequence TH.

This sequence belongs to the aspartate/glutamate racemases family.

The enzyme catalyses L-glutamate = D-glutamate. It functions in the pathway cell wall biogenesis; peptidoglycan biosynthesis. In terms of biological role, provides the (R)-glutamate required for cell wall biosynthesis. The sequence is that of Glutamate racemase from Buchnera aphidicola subsp. Schizaphis graminum (strain Sg).